The primary structure comprises 129 residues: Follitropin subunit beta (129 aa).

An N-terminal signal peptide occupies residues 1–20 (MKSVQFCFLFCCWRAICCRS). 6 cysteine pairs are disulfide-bonded: C21–C69, C35–C84, C38–C122, C46–C100, C50–C102, and C105–C112. N25 and N42 each carry an N-linked (GlcNAc...) asparagine glycan.

The protein belongs to the glycoprotein hormones subunit beta family. Heterodimer. The active follitropin is a heterodimer composed of an alpha chain/CGA shared with other hormones and a unique beta chain/FSHB shown here.

It is found in the secreted. In terms of biological role, together with the alpha chain CGA constitutes follitropin, the follicle-stimulating hormone, and provides its biological specificity to the hormone heterodimer. Binds FSHR, a G protein-coupled receptor, on target cells to activate downstream signaling pathways. Follitropin is involved in follicle development and spermatogenesis in reproductive organs. This is Follitropin subunit beta (FSHB) from Bubalus bubalis (Domestic water buffalo).